The sequence spans 679 residues: Stress-70 protein, mitochondrial (679 aa).

The N-terminal 46 residues, Met1–Tyr46, are a transit peptide targeting the mitochondrion. The segment at Met1–Val432 is interaction with NFS1. ADP contacts are provided by Thr63 and Asn64. Residues Thr63–Asp431 are nucleotide-binding domain (NBD). An N6-acetyllysine modification is found at Lys76. Position 87 is a phosphothreonine (Thr87). An N6-acetyllysine; alternate mark is found at Lys135 and Lys138. 2 positions are modified to N6-succinyllysine; alternate: Lys135 and Lys138. Lys143 bears the N6-acetyllysine mark. N6-acetyllysine; alternate is present on Lys206. The residue at position 206 (Lys206) is an N6-succinyllysine; alternate. The residue at position 206 (Lys206) is an N6-malonyllysine; alternate. 2 positions are modified to N6-acetyllysine: Lys234 and Lys288. N6-acetyllysine; alternate is present on Lys300. At Lys300 the chain carries N6-succinyllysine; alternate. Glu313, Lys316, and Ser320 together coordinate ADP. The residue at position 368 (Lys368) is an N6-succinyllysine. ADP contacts are provided by Gly388 and Arg391. N6-succinyllysine is present on Lys394. Ser408 is subject to Phosphoserine. Positions Val432 to Thr441 are interdomain linker. Positions Val432–Gln679 are interaction with FXN and ISCU. The interval Pro442–Gln679 is substrate-binding domain (SBD). Arg513 bears the Omega-N-methylarginine mark. 2 positions are modified to N6-acetyllysine; alternate: Lys567 and Lys600. Residues Lys567 and Lys600 each carry the N6-succinyllysine; alternate modification. Lys610 bears the N6-succinyllysine mark. Lys612 is subject to N6-acetyllysine. At Lys646 the chain carries N6-acetyllysine; alternate. Lys646 carries the post-translational modification N6-succinyllysine; alternate. The tract at residues Ala656–Gln679 is disordered. Over residues Glu669–Gln679 the composition is skewed to basic and acidic residues.

This sequence belongs to the heat shock protein 70 family. In terms of assembly, interacts strongly with the intermediate form of FXN and weakly with its mature form. Interacts with HSCB. Associates with the mitochondrial contact site and cristae organizing system (MICOS) complex, composed of at least MICOS10/MIC10, CHCHD3/MIC19, CHCHD6/MIC25, APOOL/MIC27, IMMT/MIC60, APOO/MIC23/MIC26 and QIL1/MIC13. This complex was also known under the names MINOS or MitOS complex. The MICOS complex associates with mitochondrial outer membrane proteins SAMM50, MTX1, MTX2 and DNAJC11, mitochondrial inner membrane protein TMEM11 and with HSPA9. Interacts with DNLZ, the interaction is required to prevent self-aggregation. Interacts with TESPA1. Interacts with PDPN. Interacts with NFU1, NFS1 and ISCU. Interacts with TP53; the interaction promotes TP53 degradation. Interacts (via SBD domain) with UBXN2A; the interaction with UBXN2A inhibits HSPA9 interaction with and degradation of TP53, thereby promotes TP53 translocation to the nucleus. Interacts with ITPR1 AND VDAC1; this interaction couples ITPR1 to VDAC1. Component of the TIM23 mitochondrial inner membrane pre-sequence translocase complex.

It is found in the mitochondrion. The protein localises to the nucleus. The protein resides in the nucleolus. Its subcellular location is the cytoplasm. It localises to the mitochondrion matrix. The catalysed reaction is ATP + H2O = ADP + phosphate + H(+). With respect to regulation, the chaperone activity is regulated by ATP-induced allosteric coupling of the nucleotide-binding (NBD) and substrate-binding (SBD) domains. ATP binding in the NBD leads to a conformational change in the NBD, which is transferred through the interdomain linker (IDL) to the substrate-binding domain (SBD). This elicits a reduced substrate affinity and a faster substrate exchange rate. Upon hydrolysis of ATP to ADP, the protein undergoes a conformational change that increases its affinity for substrate proteins. It cycles through repeated phases of ATP hydrolysis and nucleotide exchange, facilitating repeated cycles of substrate binding and release. Functions in collaboration with co-chaperones. Functions with the co-chaperone, DNLZ, to maintain solubility and regulate ATP hydrolysis. Nucleotide exchange factors, GRPEL1 and GRPEL2, accelerate nucleotide exchange. In terms of biological role, mitochondrial chaperone that plays a key role in mitochondrial protein import, folding, and assembly. Plays an essential role in the protein quality control system, the correct folding of proteins, the re-folding of misfolded proteins, and the targeting of proteins for subsequent degradation. These processes are achieved through cycles of ATP binding, ATP hydrolysis, and ADP release, mediated by co-chaperones. In mitochondria, it associates with the TIM (translocase of the inner membrane) protein complex to assist in the import and folding of mitochondrial proteins. Plays an important role in mitochondrial iron-sulfur cluster (ISC) biogenesis, interacts with and stabilizes ISC cluster assembly proteins FXN, NFU1, NFS1 and ISCU. Regulates erythropoiesis via stabilization of ISC assembly. Regulates mitochondrial calcium-dependent apoptosis by coupling two calcium channels, ITPR1 and VDAC1, at the mitochondria-associated endoplasmic reticulum (ER) membrane to facilitate calcium transport from the ER lumen to the mitochondria intermembrane space, providing calcium for the downstream calcium channel MCU, which releases it into the mitochondrial matrix. Although primarily located in the mitochondria, it is also found in other cellular compartments. In the cytosol, it associates with proteins involved in signaling, apoptosis, or senescence. It may play a role in cell cycle regulation via its interaction with and promotion of degradation of TP53. May play a role in the control of cell proliferation and cellular aging. Protects against reactive oxygen species (ROS). Extracellular HSPA9 plays a cytoprotective role by preventing cell lysis following immune attack by the membrane attack complex by disrupting formation of the complex. This chain is Stress-70 protein, mitochondrial, found in Homo sapiens (Human).